The primary structure comprises 69 residues: Photosystem I reaction center subunit IV (69 aa).

The protein belongs to the PsaE family.

Its subcellular location is the cellular thylakoid membrane. Its function is as follows. Stabilizes the interaction between PsaC and the PSI core, assists the docking of the ferredoxin to PSI and interacts with ferredoxin-NADP oxidoreductase. This chain is Photosystem I reaction center subunit IV, found in Prochlorococcus marinus (strain MIT 9215).